Here is a 569-residue protein sequence, read N- to C-terminus: 3-(3-hydroxy-phenyl)propionate/3-hydroxycinnamic acid hydroxylase (569 aa).

FAD is bound by residues 8–37 (DVVI…VVDE) and 273–283 (FREGRLMLAGD).

Belongs to the PheA/TfdB FAD monooxygenase family. It depends on FAD as a cofactor.

The enzyme catalyses 3-(3-hydroxyphenyl)propanoate + NADH + O2 + H(+) = 3-(2,3-dihydroxyphenyl)propanoate + NAD(+) + H2O. The catalysed reaction is (2E)-3-(3-hydroxyphenyl)prop-2-enoate + NADH + O2 + H(+) = (2E)-3-(2,3-dihydroxyphenyl)prop-2-enoate + NAD(+) + H2O. Its pathway is aromatic compound metabolism; 3-phenylpropanoate degradation. In terms of biological role, catalyzes the insertion of one atom of molecular oxygen into position 2 of the phenyl ring of 3-(3-hydroxyphenyl)propionate (3-HPP) and hydroxycinnamic acid (3HCI). The protein is 3-(3-hydroxy-phenyl)propionate/3-hydroxycinnamic acid hydroxylase of Mycolicibacterium gilvum (strain PYR-GCK) (Mycobacterium gilvum (strain PYR-GCK)).